The chain runs to 872 residues: Trichohyalin-like protein 1 (872 aa).

In terms of domain architecture, EF-hand spans 46 to 81 (CAIHAVERNLNLLNIDSNGAISFDEFVLAIFSFLNV). The segment covering 117 to 127 (QWTEGTSQTQD) has biased composition (polar residues). Disordered stretches follow at residues 117–759 (QWTE…ERGA), 774–813 (LQQT…DSSD), and 830–872 (EFLP…APKQ). Basic and acidic residues-rich tracts occupy residues 142-155 (SLEE…RVDP), 164-190 (LPVE…KVDQ), 218-235 (TKGE…DILA), 296-307 (GKDEPSSEHVDL), 324-348 (AAKD…ETRD), 365-375 (RVERKGVRGPE), 399-435 (EDKK…KDSE), and 486-505 (SGEK…KEDD). The segment covering 538-570 (NSETSDLFVQGDSQSQTNPFRGSVQGSDSNNPE) has biased composition (polar residues). 3 stretches are compositionally biased toward basic and acidic residues: residues 571-584 (TQKH…KRVQ), 592-608 (RGED…EHEG), and 664-684 (TKKD…KEED). 2 stretches are compositionally biased toward polar residues: residues 699–708 (ENNAVSQKTC) and 718–729 (SPQQLAGEQSLS). The segment covering 730 to 751 (TKEHDPSVSESGLEERMQRDQE) has biased composition (basic and acidic residues). Polar residues-rich tracts occupy residues 774–793 (LQQT…TASV) and 801–812 (NQSSASLTNDSS). Over residues 849–865 (LEDKQGRPQREELEPQK) the composition is skewed to basic and acidic residues.

It belongs to the S-100 family.

The sequence is that of Trichohyalin-like protein 1 (TCHHL1) from Bos taurus (Bovine).